A 336-amino-acid chain; its full sequence is Ketol-acid reductoisomerase (NADP(+)) (336 aa).

The 181-residue stretch at 3 to 183 (AKMYYDRDVD…GCTKAGVLET (181 aa)) folds into the KARI N-terminal Rossmann domain. Residues 26–29 (YGSQ), Arg-49, Ser-52, Ser-54, and 84–87 (DEQQ) contribute to the NADP(+) site. His-109 is an active-site residue. Gly-135 is a binding site for NADP(+). The KARI C-terminal knotted domain maps to 184-329 (TFKEETETDL…KELRDQMPFI (146 aa)). Mg(2+)-binding residues include Asp-192, Glu-196, Glu-228, and Glu-232. Ser-253 is a substrate binding site.

It belongs to the ketol-acid reductoisomerase family. It depends on Mg(2+) as a cofactor.

The catalysed reaction is (2R)-2,3-dihydroxy-3-methylbutanoate + NADP(+) = (2S)-2-acetolactate + NADPH + H(+). The enzyme catalyses (2R,3R)-2,3-dihydroxy-3-methylpentanoate + NADP(+) = (S)-2-ethyl-2-hydroxy-3-oxobutanoate + NADPH + H(+). The protein operates within amino-acid biosynthesis; L-isoleucine biosynthesis; L-isoleucine from 2-oxobutanoate: step 2/4. It participates in amino-acid biosynthesis; L-valine biosynthesis; L-valine from pyruvate: step 2/4. Involved in the biosynthesis of branched-chain amino acids (BCAA). Catalyzes an alkyl-migration followed by a ketol-acid reduction of (S)-2-acetolactate (S2AL) to yield (R)-2,3-dihydroxy-isovalerate. In the isomerase reaction, S2AL is rearranged via a Mg-dependent methyl migration to produce 3-hydroxy-3-methyl-2-ketobutyrate (HMKB). In the reductase reaction, this 2-ketoacid undergoes a metal-dependent reduction by NADPH to yield (R)-2,3-dihydroxy-isovalerate. In Deinococcus radiodurans (strain ATCC 13939 / DSM 20539 / JCM 16871 / CCUG 27074 / LMG 4051 / NBRC 15346 / NCIMB 9279 / VKM B-1422 / R1), this protein is Ketol-acid reductoisomerase (NADP(+)).